The chain runs to 423 residues: Adenylosuccinate synthetase (423 aa).

GTP is bound by residues G12–K18 and G40–T42. D13 acts as the Proton acceptor in catalysis. Mg(2+)-binding residues include D13 and G40. Residues D13–K16, N38–H41, T129, R143, Q224, T239, and R303 each bind IMP. Catalysis depends on H41, which acts as the Proton donor. Substrate is bound at residue S299–R305. Residues R305, K331–D333, and S412–G414 each bind GTP.

Belongs to the adenylosuccinate synthetase family. Homodimer. Mg(2+) is required as a cofactor.

It localises to the cytoplasm. The enzyme catalyses IMP + L-aspartate + GTP = N(6)-(1,2-dicarboxyethyl)-AMP + GDP + phosphate + 2 H(+). It participates in purine metabolism; AMP biosynthesis via de novo pathway; AMP from IMP: step 1/2. Functionally, plays an important role in the de novo pathway of purine nucleotide biosynthesis. Catalyzes the first committed step in the biosynthesis of AMP from IMP. This is Adenylosuccinate synthetase from Flavobacterium johnsoniae (strain ATCC 17061 / DSM 2064 / JCM 8514 / BCRC 14874 / CCUG 350202 / NBRC 14942 / NCIMB 11054 / UW101) (Cytophaga johnsonae).